The sequence spans 651 residues: Sodium/potassium/calcium exchanger 2 (651 aa).

Over 1–38 (MALCKKTVGSVLEEWCLNEPLFGCKRHQNVRKKLRLIR) the chain is Cytoplasmic. A helical membrane pass occupies residues 39–59 (IIGLLVSVVAISTFSLSISAF). At 60–134 (FKMETHSTVL…DLFSLEERRK (75 aa)) the chain is on the extracellular side. Residues 92 to 123 (QNEGSTPDSPTSMKHEAEHDNATEEHSKGEYP) are disordered. Over residues 93 to 103 (NEGSTPDSPTS) the composition is skewed to polar residues. The span at 104–122 (MKHEAEHDNATEEHSKGEY) shows a compositional bias: basic and acidic residues. The N-linked (GlcNAc...) asparagine glycan is linked to Asn-112. The helical transmembrane segment at 135 to 155 (GAVILHVIGMIYMFIALAIVC) threads the bilayer. The Cytoplasmic segment spans residues 156–179 (DEFFVPSLTVITEKLSISDDVAGA). Residues 176-216 (VAGATFMAAGGSAPELFTSLIGVFISHSNVGIGTIVGSAVF) form an Alpha-1 repeat. The chain crosses the membrane as a helical span at residues 180–200 (TFMAAGGSAPELFTSLIGVFI). Over 201–206 (SHSNVG) the chain is Extracellular. A helical membrane pass occupies residues 207–227 (IGTIVGSAVFNILFVIGMCAL). Topologically, residues 228 to 245 (FSREILNLTWWPLFRDVS) are cytoplasmic. Residues 246-266 (FYIVDLILLIIFFLDNLIMWW) traverse the membrane as a helical segment. Topologically, residues 267-459 (ESLTLLTAYF…SLAWPDTPRK (193 aa)) are extracellular. Over residues 304 to 322 (ATTGDAEGKSPTAGDKDDQ) the composition is skewed to basic and acidic residues. Residues 304 to 338 (ATTGDAEGKSPTAGDKDDQTLTTKPRLQRGGSSAS) are disordered. Residues 323–338 (TLTTKPRLQRGGSSAS) are compositionally biased toward polar residues. A helical transmembrane segment spans residues 460 to 480 (QLTYLLVLPIVFPLWVSLPDV). Residues 481–487 (RNPRSRK) are Cytoplasmic-facing. Residues 488–508 (FFPITFFGSISWIAFFSYLMV) form a helical membrane-spanning segment. Over 509-523 (WWAHQVGETIGISEE) the chain is Extracellular. The helical transmembrane segment at 524 to 544 (IMGLTILAAGTSIPDLITSVI) threads the bilayer. The Alpha-2 repeat unit spans residues 531 to 562 (AAGTSIPDLITSVIVARKGLGDMAVSSSVGSN). At 545–562 (VARKGLGDMAVSSSVGSN) the chain is on the cytoplasmic side. A helical membrane pass occupies residues 563–583 (IFDITVGLPLPWLLYAVINNF). The Extracellular portion of the chain corresponds to 584-592 (SPVTVSSNG). A helical transmembrane segment spans residues 593–613 (LFCAIVLLFIMLLFVILSIAF). The Cytoplasmic segment spans residues 614–620 (CKWRMNK). A helical transmembrane segment spans residues 621 to 641 (FLGFLMFGLYFVFLIVSVLLE). At 642 to 651 (DKVIQCPVSI) the chain is on the extracellular side.

This sequence belongs to the Ca(2+):cation antiporter (CaCA) (TC 2.A.19) family. SLC24A subfamily. Retinal cones. Found in the cone inner segment layer and in a subpopulation of ganglion cells.

The protein localises to the cell membrane. It catalyses the reaction Ca(2+)(out) + K(+)(out) + 4 Na(+)(in) = Ca(2+)(in) + K(+)(in) + 4 Na(+)(out). In terms of biological role, calcium, potassium:sodium antiporter that transports 1 Ca(2+) and 1 K(+) in exchange for 4 Na(+). Required for learming and memory by regulating neuronal Ca(2+), which is essential for the development of synaptic plasticity. The sequence is that of Sodium/potassium/calcium exchanger 2 (SLC24A2) from Gallus gallus (Chicken).